We begin with the raw amino-acid sequence, 179 residues long: NADH-quinone oxidoreductase subunit I (179 aa).

4Fe-4S ferredoxin-type domains lie at 45 to 74 (RHPD…VEAA) and 90 to 119 (KVYE…LGNE). 8 residues coordinate [4Fe-4S] cluster: cysteine 54, cysteine 57, cysteine 60, cysteine 64, cysteine 99, cysteine 102, cysteine 105, and cysteine 109. The disordered stretch occupies residues 146-179 (PQRREAQRTGKPVRLGFKVPKGPRPELEGVEYPR). Positions 168 to 179 (PRPELEGVEYPR) are enriched in basic and acidic residues.

Belongs to the complex I 23 kDa subunit family. In terms of assembly, NDH-1 is composed of 15 different subunits. Subunits NuoA, H, J, K, L, M, N constitute the membrane sector of the complex. [4Fe-4S] cluster is required as a cofactor.

Its subcellular location is the cell membrane. The enzyme catalyses a quinone + NADH + 5 H(+)(in) = a quinol + NAD(+) + 4 H(+)(out). Functionally, NDH-1 shuttles electrons from NADH, via FMN and iron-sulfur (Fe-S) centers, to quinones in the respiratory chain. The immediate electron acceptor for the enzyme in this species is believed to be ubiquinone. Couples the redox reaction to proton translocation (for every two electrons transferred, four hydrogen ions are translocated across the cytoplasmic membrane), and thus conserves the redox energy in a proton gradient. The sequence is that of NADH-quinone oxidoreductase subunit I from Deinococcus geothermalis (strain DSM 11300 / CIP 105573 / AG-3a).